The sequence spans 213 residues: Gas vesicle protein F1 (213 aa).

It belongs to the gas vesicle GvpF/GvpL family. In terms of assembly, binds GvpA1 in early growth stages; is the only one of GvpF1 to GvpM1 that interacts with GvpA1 in H.volcanii experiments. GvpF to GvpM interact with each other in vitro, and may form multi-subunit complex(es). Interacts with GvpC1 and GvpO1.

It is found in the gas vesicle. It localises to the cytoplasm. In terms of biological role, might be involved in preventing aggregation of GvpA1. Proteins GvpF to GvpM might be involved in nucleating gas vesicle formation. A minor component of the gas vesicle, also found in soluble extracts. Gas vesicles are hollow, gas filled proteinaceous nanostructures found in several microbial planktonic microorganisms. They allow positioning of halobacteria at the optimal depth for growth in the poorly aerated, shallow brine pools of their habitat. Expression of a 9.5 kb p-vac DNA fragment containing 2 divergently transcribed regions (gvpD-gvpE-gvpF-gvpG-gvpH-gvpI-gvpJ-gvpK-gvpL-gvpM and gvpA-gvpC-gvpN-gvpO) allows H.volcanii to produce gas vesicles. A minimal gas vesicle can be made in H.volcanii by gvpA1-gvpO1 plus gvpF1-gvpG1-gvpJ1-gvpK1-gvpL1-gvpM1; lack of enough GvpJ1 prevents formation. The same region restores gas vesicle production in H.halobium without the p-vac locus. This is Gas vesicle protein F1 (gvpF11) from Halobacterium salinarum (strain ATCC 700922 / JCM 11081 / NRC-1) (Halobacterium halobium).